The chain runs to 323 residues: Sphingolipid delta(4)-desaturase DES1 (323 aa).

The N-myristoyl glycine moiety is linked to residue G2. 2 helical membrane passes run 41-61 (PNLIWIIIMMVLTQLGAFYIV) and 68-88 (WVIFGAYAFGSCINHSMTLAI). The Histidine box-1 motif lies at 89 to 93 (HEIAH). Residues 102 to 122 (AMWNRWFGMFANLPIGIPYSI) traverse the membrane as a helical segment. Positions 128–132 (HMDHH) match the Histidine box-2 motif. Transmembrane regions (helical) follow at residues 152–172 (FFCTAFRKFIWVILQPLFYAF), 184–204 (YLEVINTVAQVTFDILIYYFL), and 209–229 (LVYMLAASLLGLGLHPISGHF). The Histidine box-3 motif lies at 259–263 (HNEHH). At S307 the chain carries Phosphoserine.

The protein belongs to the fatty acid desaturase type 1 family. DEGS subfamily. As to quaternary structure, interacts with RLBP1; the interaction increases synthesis of chromophore-precursors by DEGS1. Post-translationally, myristoylation can target the enzyme to the mitochondria leading to an increase in ceramide levels. Ubiquitous.

It localises to the mitochondrion membrane. Its subcellular location is the endoplasmic reticulum membrane. The catalysed reaction is an N-acylsphinganine + 2 Fe(II)-[cytochrome b5] + O2 + 2 H(+) = an N-acylsphing-4-enine + 2 Fe(III)-[cytochrome b5] + 2 H2O. It catalyses the reaction all-trans-retinol = 11-cis-retinol. The enzyme catalyses all-trans-retinol = 9-cis-retinol. It carries out the reaction all-trans-retinol = 13-cis-retinol. The catalysed reaction is 11-cis-retinol = 13-cis-retinol. It catalyses the reaction 11-cis-retinol = 9-cis-retinol. Has sphingolipid-delta-4-desaturase activity. Converts D-erythro-sphinganine to D-erythro-sphingosine (E-sphing-4-enine). Catalyzes the equilibrium isomerization of retinols. The polypeptide is Sphingolipid delta(4)-desaturase DES1 (Homo sapiens (Human)).